A 160-amino-acid polypeptide reads, in one-letter code: Cytochrome b6-f complex subunit 4 (160 aa).

Helical transmembrane passes span 36–56 (LLYIFPVVILGTIACIVGLAV), 95–115 (LLGIALQTLVPLGLMLVPFIE), and 131–151 (TVFLFGTVTTIYLGIGAALPI).

It belongs to the cytochrome b family. PetD subfamily. In terms of assembly, the 4 large subunits of the cytochrome b6-f complex are cytochrome b6, subunit IV (17 kDa polypeptide, PetD), cytochrome f and the Rieske protein, while the 4 small subunits are PetG, PetL, PetM and PetN. The complex functions as a dimer.

It is found in the cellular thylakoid membrane. Its function is as follows. Component of the cytochrome b6-f complex, which mediates electron transfer between photosystem II (PSII) and photosystem I (PSI), cyclic electron flow around PSI, and state transitions. The polypeptide is Cytochrome b6-f complex subunit 4 (Parasynechococcus marenigrum (strain WH8102)).